The chain runs to 359 residues: Phosphate acyltransferase (359 aa).

The interval 337–359 (AAGAAQPAPETEVPGAHPSPHVA) is disordered.

It belongs to the PlsX family. As to quaternary structure, homodimer. Probably interacts with PlsY.

Its subcellular location is the cytoplasm. The enzyme catalyses a fatty acyl-[ACP] + phosphate = an acyl phosphate + holo-[ACP]. It participates in lipid metabolism; phospholipid metabolism. Its function is as follows. Catalyzes the reversible formation of acyl-phosphate (acyl-PO(4)) from acyl-[acyl-carrier-protein] (acyl-ACP). This enzyme utilizes acyl-ACP as fatty acyl donor, but not acyl-CoA. This Cupriavidus necator (strain ATCC 17699 / DSM 428 / KCTC 22496 / NCIMB 10442 / H16 / Stanier 337) (Ralstonia eutropha) protein is Phosphate acyltransferase.